The primary structure comprises 2035 residues: Host cell factor 1 (2035 aa).

A2 carries the N-acetylalanine modification. S6 is subject to Phosphoserine. Kelch repeat units follow at residues 44 to 89, 93 to 140, 148 to 194, 217 to 265, and 266 to 313; these read LIVV…GFVC, RLLV…RLGH, KCYL…ITYG, KLVI…TIGN, and KMYV…LMDT. Glycyl lysine isopeptide (Lys-Gly) (interchain with G-Cter in ubiquitin) cross-links involve residues K105, K163, and K244. K282 is covalently cross-linked (Glycyl lysine isopeptide (Lys-Gly) (interchain with G-Cter in SUMO2)). Residue K288 is modified to N6-acetyllysine. K363 participates in a covalent cross-link: Glycyl lysine isopeptide (Lys-Gly) (interchain with G-Cter in ubiquitin). A Fibronectin type-III 1 domain is found at 366–466; the sequence is PPARVQLVRA…TTTTIQVLPT (101 aa). The segment at 407-434 is disordered; sequence ATATSPTPNPVPSVPANPPKSPAPAAAA. Phosphoserine is present on S411. Residues 413–428 are compositionally biased toward pro residues; the sequence is TPNPVPSVPANPPKSP. Residues 500 to 550 are required for interaction with OGT; that stretch reads LVTMRPASQAGKAPVTVTSLPAGVRMVVPTQSAQGTVIGSSPQMSGMAALA. An omega-N-methylarginine mark is found at R504 and R524. Phosphoserine occurs at positions 598, 666, and 669. The interaction with SIN3A stretch occupies residues 610–722; it reads LKTAAAQVGT…KGPLPAGTIL (113 aa). The interaction with ZBTB17 stretch occupies residues 750 to 902; sequence ILGISSVSPS…SLAGAGGHST (153 aa). At K813 the chain carries N6-acetyllysine. An interaction with GABP2 region spans residues 813-912; that stretch reads KIITAVPKIA…SASLATPITT (100 aa). 3 HCF repeat repeats span residues 1010–1035, 1072–1097, and 1101–1126; these read TLVC…TVVA, VRVC…ATSN, and QHGC…AMSS. An HCF repeat 4; degenerate repeat occupies 1158 to 1183; sequence AAQGSKSQCQTRQTSATSTTMTVMAT. At S1205 the chain carries Phosphoserine. Position 1219 is an omega-N-methylarginine (R1219). Position 1224 is a phosphoserine (S1224). 2 HCF repeat repeats span residues 1286 to 1311 and 1314 to 1339; these read TQVC…SNAG and QRVC…ATSN. Disordered stretches follow at residues 1292–1371, 1435–1470, and 1487–1515; these read PPCE…TMSV, TVTS…TSSS, and VTQS…QQLP. Low complexity-rich tracts occupy residues 1299 to 1312, 1329 to 1339, and 1362 to 1371; these read TGTT…NAGS, TTHTATTATSN, and TTSTGTTMSV. An HCF repeat 7; degenerate repeat occupies 1349–1374; it reads QQPPAGRPCETHQTTSTGTTMSVSVG. The stretch at 1414–1439 is one HCF repeat 8 repeat; sequence QRVCSNPPCETHETGTTHTATTVTSN. T1491 is modified (phosphothreonine). The span at 1493 to 1502 shows a compositional bias: pro residues; the sequence is VPGPSVPPPE. 3 positions are modified to phosphoserine: S1497, S1507, and S1771. Fibronectin type-III domains lie at 1797-1888 and 1890-2006; these read LPPP…TCLP and FPGA…TSKD. Residues K1807 and K1808 each participate in a glycyl lysine isopeptide (Lys-Gly) (interchain with G-Cter in ubiquitin) cross-link. The residue at position 1838 (S1838) is a Phosphoserine. The segment at 1994–2035 is disordered; it reads ATQVRWLQETSKDSSGTKPANKRPMSSPEMKSAPKKSKADGQ. An N6-acetyllysine modification is found at K2005. K2024 is covalently cross-linked (Glycyl lysine isopeptide (Lys-Gly) (interchain with G-Cter in SUMO2)).

As to quaternary structure, composed predominantly of six polypeptides ranging from 110 to 150 kDa and a minor 300 kDa polypeptide. The majority of N- and C-terminal cleavage products remain tightly, albeit non-covalently, associated. Interacts with POU2F1, CREB3, ZBTB17, EGR2, E2F4, CREBZF, SP1, GABP2, Sin3 HDAC complex (SIN3A, HDAC1, HDAC2, SUDS3), SAP30, SIN3B and FHL2. Component of a MLL1 complex, composed of at least the core components KMT2A/MLL1, ASH2L, HCFC1, WDR5 and RBBP5, as well as the facultative components BACC1, CHD8, DPY30, E2F6, HCFC2, HSP70, INO80C, KANSL1, LAS1L, MAX, MCRS1, MEN1, MGA, KAT8, PELP1, PHF20, PRP31, RING2, RUVBL1, RUVBL2, SENP3, TAF1, TAF4, TAF6, TAF7, TAF9 and TEX10. Component of a THAP1/THAP3-HCFC1-OGT complex that is required for the regulation of the transcriptional activity of RRM1. Interacts directly with THAP3 (via its HBM). Interacts (via the Kelch-repeat domain) with THAP1 (via the HBM); the interaction recruits HCHC1 to the RRM1. Interacts with THAP7 and THAP11 (via the HMB). Interacts directly with OGT; the interaction, which requires the HCFC1 cleavage site domain, glycosylates and promotes the proteolytic processing of HCFC1, retains OGT in the nucleus and impacts the expression of herpes simplex virus immediate early viral genes. Component of the SET1 complex, at least composed of the catalytic subunit (SETD1A or SETD1B), WDR5, WDR82, RBBP5, ASH2L, CXXC1, HCFC1 and DPY30. Component of the NSL complex at least composed of MOF/KAT8, KANSL1, KANSL2, KANSL3, MCRS1, PHF20, OGT1/OGT, WDR5 and HCFC1. Component of a complex at least composed of ZNF335, HCFC1, CCAR2, EMSY, MKI67, RBBP5, ASH2L and WDR5; the complex is formed as a result of interactions between components of a nuclear receptor-mediated transcription complex and a histone methylation complex. Within the complex interacts with ZNF335. Interacts with TET2 and TET3. Interacts with HCFC1R1. Interacts with THAP11. Interacts (via Kelch domain) with KMT2E/MLL5 isoform 3 (via HBM motif). Interacts with E2F1. Accessory scaffold component of the polycomb repressive deubiquitinase (PR-DUB) complex, at least composed of BAP1, one of ASXL1, ASXL2 or (probably) ASXL3 and one of MBD5 or MBD6; the PR-DUB core associates with a number of accessory proteins, including FOXK1, FOXK2, KDM1B, HCFC1, YY1 and OGT. Interacts with YY1 (via Gly-rich region); the interaction is direct. Interacts with BAP1 (via HBM-like motif). (Microbial infection) Associates with the VP16-induced complex; binding to HCFC1 activates the viral transcriptional activator VP16 for association with POU2F1, to form a multiprotein-DNA complex responsible for activating transcription of the viral immediate early genes. Interacts with the viral transactivator protein VP16. Proteolytically cleaved at one or several PPCE--THET sites within the HCF repeats. Further cleavage of the primary N- and C-terminal chains results in a 'trimming' and accumulation of the smaller chains. Cleavage is promoted by O-glycosylation. In terms of processing, O-glycosylated. GlcNAcylation by OGT promotes proteolytic processing. Post-translationally, ubiquitinated. Lys-1807 and Lys-1808 are ubiquitinated both via 'Lys-48'- and 'Lys-63'-linked polyubiquitin chains. BAP1 mediated deubiquitination of 'Lys-48'-linked polyubiquitin chains; deubiquitination by BAP1 does not seem to stabilize the protein. Highly expressed in fetal tissues and the adult kidney. Present in all tissues tested.

Its subcellular location is the cytoplasm. It is found in the nucleus. Functionally, transcriptional coregulator. Serves as a scaffold protein, bridging interactions between transcription factors, including THAP11 and ZNF143, and transcriptional coregulators. Involved in control of the cell cycle. Also antagonizes transactivation by ZBTB17 and GABP2; represses ZBTB17 activation of the p15(INK4b) promoter and inhibits its ability to recruit p300. Coactivator for EGR2 and GABP2. Tethers the chromatin modifying Set1/Ash2 histone H3 'Lys-4' methyltransferase (H3K4me) and Sin3 histone deacetylase (HDAC) complexes (involved in the activation and repression of transcription, respectively) together. Component of a THAP1/THAP3-HCFC1-OGT complex that is required for the regulation of the transcriptional activity of RRM1. As part of the NSL complex it may be involved in acetylation of nucleosomal histone H4 on several lysine residues. Recruits KMT2E/MLL5 to E2F1 responsive promoters promoting transcriptional activation and thereby facilitates G1 to S phase transition. Modulates expression of homeobox protein PDX1, perhaps acting in concert with transcription factor E2F1, thereby regulating pancreatic beta-cell growth and glucose-stimulated insulin secretion. May negatively modulate transcriptional activity of FOXO3. (Microbial infection) In case of human herpes simplex virus (HSV) infection, HCFC1 forms a multiprotein-DNA complex with the viral transactivator protein VP16 and POU2F1 thereby enabling the transcription of the viral immediate early genes. The polypeptide is Host cell factor 1 (Homo sapiens (Human)).